The following is a 420-amino-acid chain: UDP-N-acetylmuramoylalanine--D-glutamate ligase (420 aa).

Glycine 109–threonine 115 contacts ATP.

Belongs to the MurCDEF family.

It localises to the cytoplasm. It carries out the reaction UDP-N-acetyl-alpha-D-muramoyl-L-alanine + D-glutamate + ATP = UDP-N-acetyl-alpha-D-muramoyl-L-alanyl-D-glutamate + ADP + phosphate + H(+). Its pathway is cell wall biogenesis; peptidoglycan biosynthesis. Functionally, cell wall formation. Catalyzes the addition of glutamate to the nucleotide precursor UDP-N-acetylmuramoyl-L-alanine (UMA). This Fervidobacterium nodosum (strain ATCC 35602 / DSM 5306 / Rt17-B1) protein is UDP-N-acetylmuramoylalanine--D-glutamate ligase.